Consider the following 813-residue polypeptide: Leucine--tRNA ligase (813 aa).

The 'HIGH' region motif lies at 42 to 52; the sequence is PYTSGNLHIGH. Positions 580 to 584 match the 'KMSKS' region motif; sequence KMSKS. Residue Lys-583 coordinates ATP.

It belongs to the class-I aminoacyl-tRNA synthetase family.

It is found in the cytoplasm. The enzyme catalyses tRNA(Leu) + L-leucine + ATP = L-leucyl-tRNA(Leu) + AMP + diphosphate. The chain is Leucine--tRNA ligase from Dehalococcoides mccartyi (strain ATCC BAA-2100 / JCM 16839 / KCTC 5957 / BAV1).